A 259-amino-acid chain; its full sequence is Leucine-rich repeat-containing protein 3B (259 aa).

The N-terminal stretch at 1–33 (MNLVDLWLTRSLSMCLLLQSFVLMILCFHSASM) is a signal peptide. An LRRNT domain is found at 34–64 (CPKGCLCSSSGGLNVTCSNANLKEIPRDLPP). Asn47 is a glycosylation site (N-linked (GlcNAc...) asparagine). 3 LRR repeats span residues 65–86 (ETVL…IFKD), 89–110 (QLRV…AFKG), and 114–135 (TLQT…AFNN). Asn94 carries N-linked (GlcNAc...) asparagine glycosylation. The region spanning 145–197 (NPWHCDCTLQQVLRSMVSNHETAHNVICKTSVLDEHAGRPFLNAANDADLCNL) is the LRRCT domain. Residues 205-225 (AMLVTMFGWFTMVISYVVYYV) traverse the membrane as a helical segment.

Belongs to the LRRC3 family.

Its subcellular location is the membrane. The sequence is that of Leucine-rich repeat-containing protein 3B (LRRC3B) from Bos taurus (Bovine).